The sequence spans 556 residues: Chaperone protein HscC (556 aa).

Belongs to the heat shock protein 70 family.

Probable chaperone. Has ATPase activity. Not stimulated by DnaJ. This Escherichia coli (strain K12) protein is Chaperone protein HscC (hscC).